A 568-amino-acid chain; its full sequence is Periplasmic trehalase (568 aa).

The first 39 residues, 1-39 (MPYATARSGDVMSSAAPPCCTSLLGLSLSMFVAPGTLTA), serve as a signal peptide directing secretion. Residues Arg-169, 176 to 177 (WD), Asn-213, 222 to 224 (RSQ), 294 to 296 (RPE), and Gly-327 each bind substrate. Catalysis depends on proton donor/acceptor residues Asp-329 and Glu-511. A substrate-binding site is contributed by Glu-526.

This sequence belongs to the glycosyl hydrolase 37 family.

It is found in the periplasm. It carries out the reaction alpha,alpha-trehalose + H2O = alpha-D-glucose + beta-D-glucose. Functionally, provides the cells with the ability to utilize trehalose at high osmolarity by splitting it into glucose molecules that can subsequently be taken up by the phosphotransferase-mediated uptake system. The protein is Periplasmic trehalase of Xanthomonas axonopodis pv. citri (strain 306).